Here is a 221-residue protein sequence, read N- to C-terminus: Iron-sulfur cluster repair protein YtfE (221 aa).

It belongs to the RIC family. YtfE subfamily. Homodimer.

Its subcellular location is the cytoplasm. Di-iron-containing protein involved in the repair of iron-sulfur clusters damaged by oxidative and nitrosative stress conditions. The chain is Iron-sulfur cluster repair protein YtfE from Cronobacter sakazakii (strain ATCC BAA-894) (Enterobacter sakazakii).